Reading from the N-terminus, the 142-residue chain is Small ribosomal subunit protein uS8c (142 aa).

It belongs to the universal ribosomal protein uS8 family. Part of the 30S ribosomal subunit.

The protein resides in the plastid. In terms of biological role, one of the primary rRNA binding proteins, it binds directly to 16S rRNA central domain where it helps coordinate assembly of the platform of the 30S subunit. The sequence is that of Small ribosomal subunit protein uS8c (rps8) from Euglena longa (Euglenophycean alga).